Here is a 468-residue protein sequence, read N- to C-terminus: Interleukin-9 receptor (468 aa).

A signal peptide spans 1–37; it reads MALGRCIAEGWTLERVAVKQVSWFLIYSWVCSGVCRG. At 38 to 270 the chain is on the extracellular side; sequence VSVPEQGGGG…GLLVPRWQWS (233 aa). Residues N116 and N155 are each glycosylated (N-linked (GlcNAc...) asparagine). The region spanning 148–256 is the Fibronectin type-III domain; the sequence is PPSDLQSNVS…WSQPVSFPSP (109 aa). The WSXWS motif signature appears at 244 to 248; sequence WSEWS. Residues 271–291 traverse the membrane as a helical segment; sequence ASILVVVPIFLLLTGFVHLLF. Residues 292–468 are Cytoplasmic-facing; that stretch reads KLSPRLKRIF…PVALPVSSRA (177 aa). Positions 301-309 match the Box 1 motif motif; that stretch reads FYQNIPSPE. The tract at residues 407 to 426 is disordered; sequence PQEDWAPLGSARPPPPDSDS.

This sequence belongs to the type I cytokine receptor family. Type 4 subfamily. Interacts with IL9.

It is found in the cell membrane. The protein resides in the secreted. Its function is as follows. Plays an important role in the immune response against parasites by acting as a receptor of IL9. The chain is Interleukin-9 receptor (Il9r) from Mus musculus (Mouse).